A 195-amino-acid chain; its full sequence is Shikimate kinase (195 aa).

Residue 31–36 (GAGKSC) coordinates ATP. Position 35 (Ser-35) interacts with Mg(2+). Positions 53, 77, and 99 each coordinate substrate. Arg-137 contributes to the ATP binding site. Arg-156 provides a ligand contact to substrate.

This sequence belongs to the shikimate kinase family. Monomer. It depends on Mg(2+) as a cofactor.

It is found in the cytoplasm. It carries out the reaction shikimate + ATP = 3-phosphoshikimate + ADP + H(+). The protein operates within metabolic intermediate biosynthesis; chorismate biosynthesis; chorismate from D-erythrose 4-phosphate and phosphoenolpyruvate: step 5/7. Functionally, catalyzes the specific phosphorylation of the 3-hydroxyl group of shikimic acid using ATP as a cosubstrate. The polypeptide is Shikimate kinase (Paramagnetospirillum magneticum (strain ATCC 700264 / AMB-1) (Magnetospirillum magneticum)).